Here is a 435-residue protein sequence, read N- to C-terminus: UPF0597 protein AHA_4077 (435 aa).

Belongs to the UPF0597 family.

The protein is UPF0597 protein AHA_4077 of Aeromonas hydrophila subsp. hydrophila (strain ATCC 7966 / DSM 30187 / BCRC 13018 / CCUG 14551 / JCM 1027 / KCTC 2358 / NCIMB 9240 / NCTC 8049).